Here is a 608-residue protein sequence, read N- to C-terminus: Threonine--tRNA ligase (608 aa).

The editing domain stretch occupies residues 1–143 (MRVLYIHAER…VFKPEEAKTE (143 aa)). 2 catalytic regions span residues 194–490 (PKYL…PRLP) and 195–490 (KYLD…PRLP). Residues Cys-287, His-338, and His-459 each contribute to the Zn(2+) site.

The protein belongs to the class-II aminoacyl-tRNA synthetase family. Homodimer. Zn(2+) serves as cofactor.

The protein resides in the cytoplasm. It catalyses the reaction tRNA(Thr) + L-threonine + ATP = L-threonyl-tRNA(Thr) + AMP + diphosphate + H(+). Catalyzes the attachment of threonine to tRNA(Thr) in a two-step reaction: L-threonine is first activated by ATP to form Thr-AMP and then transferred to the acceptor end of tRNA(Thr). Also edits incorrectly charged L-seryl-tRNA(Thr). In Pyrobaculum arsenaticum (strain DSM 13514 / JCM 11321 / PZ6), this protein is Threonine--tRNA ligase.